We begin with the raw amino-acid sequence, 681 residues long: PTS system glucose-specific EIICBA component (681 aa).

The PTS EIIC type-1 domain maps to 3–414 (KKLFGQLQRI…LKYKTPGRED (412 aa)). Helical transmembrane passes span 16-36 (LMLPVAILPAAGLLLAIGTAM), 73-93 (MIFALGVAIGLAGGDGVAAIA), 126-146 (ILGIPTLQTGVFGGIIIGALA), 170-190 (FVPIMMATTSFILAFPMALIW), 199-219 (AFSTGLLDSNTGVAVFLFGFI), 273-293 (FMQGEFPVMMFGLPAAALAIY), 303-323 (VVAGLMGSAALTSFLTGITEP), 328-348 (FLFVAPLLFFIHAVLDGLSFL), 355-375 (LHLGYTFSGGFIDYFLLGILP), and 383-403 (VIPVGLVYAVIYYFVFRFLIV). Residues 425–506 (TELPYAVLEA…QQIMNGQVVE (82 aa)) form the PTS EIIB type-1 domain. Residue C447 is the Phosphocysteine intermediate; for EIIB activity of the active site. The PTS EIIA type-1 domain occupies 551 to 655 (DQVFSEKMMG…SDITPIIVTQ (105 aa)). The active-site Tele-phosphohistidine intermediate; for EIIA activity is the H603.

It localises to the cell membrane. The catalysed reaction is N(pros)-phospho-L-histidyl-[protein] + D-glucose(out) = D-glucose 6-phosphate(in) + L-histidyl-[protein]. In terms of biological role, the phosphoenolpyruvate-dependent sugar phosphotransferase system (sugar PTS), a major carbohydrate active transport system, catalyzes the phosphorylation of incoming sugar substrates concomitantly with their translocation across the cell membrane. This system is involved in glucose transport. This Staphylococcus aureus (strain MRSA252) protein is PTS system glucose-specific EIICBA component (ptsG).